The sequence spans 138 residues: Large ribosomal subunit protein uL16 (138 aa).

Basic residues predominate over residues 1–13; sequence MLQPKRRKYRKEQ. The disordered stretch occupies residues 1 to 24; the sequence is MLQPKRRKYRKEQKGRNTGKATRG.

This sequence belongs to the universal ribosomal protein uL16 family. In terms of assembly, part of the 50S ribosomal subunit.

Functionally, binds 23S rRNA and is also seen to make contacts with the A and possibly P site tRNAs. The protein is Large ribosomal subunit protein uL16 of Cupriavidus necator (strain ATCC 17699 / DSM 428 / KCTC 22496 / NCIMB 10442 / H16 / Stanier 337) (Ralstonia eutropha).